A 183-amino-acid chain; its full sequence is MKYIEVDEELYRHIASKTERIGESASDILRRLLGLSVDTVEQAQPQAISQPSLEAATPEPQFVPQVETFVAAADFHQLVDEHKLEQQKGAVGRFLFLLESLYQLNKTQFAQILQIQGRDRLYFARSREELLKASATANPKEIGQTGFWVTTNNNTAKKRAILAEALVQFGCDAEIANGIAERV.

Residues 90–91 (AV) form an interaction with DNA region.

It belongs to the SeqA family. In terms of assembly, homodimer. Polymerizes to form helical filaments.

The protein localises to the cytoplasm. Negative regulator of replication initiation, which contributes to regulation of DNA replication and ensures that replication initiation occurs exactly once per chromosome per cell cycle. Binds to pairs of hemimethylated GATC sequences in the oriC region, thus preventing assembly of replication proteins and re-initiation at newly replicated origins. Repression is relieved when the region becomes fully methylated. The chain is Negative modulator of initiation of replication from Shewanella oneidensis (strain ATCC 700550 / JCM 31522 / CIP 106686 / LMG 19005 / NCIMB 14063 / MR-1).